The sequence spans 187 residues: Structural protein ORF187 (187 aa).

Residues 65 to 85 (IYQPTAIAVSGVGGIIGALLA) traverse the membrane as a helical segment.

The protein resides in the host membrane. It localises to the virion. This is Structural protein ORF187 from Acidianus two-tailed virus (ATV).